A 223-amino-acid chain; its full sequence is Icarapin (223 aa).

Residues 1 to 19 (MKTLGVLFIAAWFIACTHS) form the signal peptide. 4 N-linked (GlcNAc...) asparagine glycosylation sites follow: Asn-126, Asn-142, Asn-168, and Asn-193. A compositionally biased stretch (polar residues) spans 186–203 (LPTLIGKNETSTQSSRSV). The segment at 186–223 (LPTLIGKNETSTQSSRSVESVEDFDNEIPKNQGDVLTA) is disordered.

In terms of tissue distribution, expressed by the venom duct.

It localises to the secreted. In Apis mellifera carnica (Carniolan honeybee), this protein is Icarapin.